A 236-amino-acid chain; its full sequence is Syntaxin-8 (236 aa).

The Cytoplasmic segment spans residues Met-1–Gly-215. The stretch at Val-42 to Ala-65 forms a coiled coil. The region spanning Gln-145–Val-207 is the t-SNARE coiled-coil homology domain. Ser-160 carries the post-translational modification Phosphoserine. The helical; Anchor for type IV membrane protein transmembrane segment at Met-216–Val-232 threads the bilayer. Topologically, residues Trp-233 to Asn-236 are vesicular.

Belongs to the syntaxin family. Forms a SNARE complex with STX7, VTI1B and VAMP8 which functions in the homotypic fusion of late endosomes. Part of the SNARE core complex containing STX7, VAMP8 and VTI1B. Interacts with VAMP8. Interacts with HECTD3. Interacts with TPC1. Post-translationally, ubiquitinated by HECTD3. As to expression, highly expressed in heart. Also found in brain, kidney, liver, lung, placenta, skeletal muscle, spleen and pancreas.

Its subcellular location is the membrane. Its function is as follows. Vesicle trafficking protein that functions in the early secretory pathway, possibly by mediating retrograde transport from cis-Golgi membranes to the ER. The chain is Syntaxin-8 (STX8) from Homo sapiens (Human).